Consider the following 362-residue polypeptide: Phosphoserine aminotransferase (362 aa).

L-glutamate contacts are provided by Ser-9 and Arg-42. Pyridoxal 5'-phosphate is bound by residues 76–77 (GR), Trp-102, Thr-153, Asp-174, and Gln-197. Lys-198 is subject to N6-(pyridoxal phosphate)lysine. A pyridoxal 5'-phosphate-binding site is contributed by 239-240 (NT).

The protein belongs to the class-V pyridoxal-phosphate-dependent aminotransferase family. SerC subfamily. In terms of assembly, homodimer. Pyridoxal 5'-phosphate is required as a cofactor.

Its subcellular location is the cytoplasm. The enzyme catalyses O-phospho-L-serine + 2-oxoglutarate = 3-phosphooxypyruvate + L-glutamate. It catalyses the reaction 4-(phosphooxy)-L-threonine + 2-oxoglutarate = (R)-3-hydroxy-2-oxo-4-phosphooxybutanoate + L-glutamate. It participates in amino-acid biosynthesis; L-serine biosynthesis; L-serine from 3-phospho-D-glycerate: step 2/3. The protein operates within cofactor biosynthesis; pyridoxine 5'-phosphate biosynthesis; pyridoxine 5'-phosphate from D-erythrose 4-phosphate: step 3/5. Functionally, catalyzes the reversible conversion of 3-phosphohydroxypyruvate to phosphoserine and of 3-hydroxy-2-oxo-4-phosphonooxybutanoate to phosphohydroxythreonine. This chain is Phosphoserine aminotransferase, found in Salmonella choleraesuis (strain SC-B67).